We begin with the raw amino-acid sequence, 221 residues long: UPF0758 protein YicR (221 aa).

The MPN domain maps to 99–221 (ALLSPEMTRE…YVSFAERGWI (123 aa)). Zn(2+) contacts are provided by histidine 170, histidine 172, and aspartate 183. The JAMM motif motif lies at 170 to 183 (HNHPSGCAEPSKAD).

The protein belongs to the UPF0758 family. YicR subfamily.

The chain is UPF0758 protein YicR from Salmonella newport (strain SL254).